The primary structure comprises 486 residues: Maintenance of mitochondrial morphology protein 1 (486 aa).

Topologically, residues 1 to 20 (MNFQQSAIPPFSFLLSFTQG) are lumenal. Residues 21–41 (FLLGQLSVVLLIGAFIKFFIF) form a helical membrane-spanning segment. At 42–486 (GEAPPPPSRG…GSLPDGAVGN (445 aa)) the chain is on the cytoplasmic side. Disordered stretches follow at residues 70–96 (TNEA…SSST), 271–320 (TPPL…SPKS), and 387–486 (RTGV…AVGN). Residues 83 to 96 (STSNVLRPVPSSST) are compositionally biased toward polar residues. One can recognise an SMP-LTD domain in the interval 128-379 (QPESLDWFNV…EPRVQVVGLP (252 aa)). A compositionally biased stretch (pro residues) spans 271–282 (TPPLHTPSPSPA). A compositionally biased stretch (low complexity) spans 292–306 (QSQPENNSSNPNQQS). Polar residues-rich tracts occupy residues 398–407 (TGSNAASRSA) and 440–450 (DSVSRSSSFNV). Over residues 460–474 (MTREDSRGAISDDFH) the composition is skewed to basic and acidic residues.

Belongs to the MMM1 family. Homodimer. Component of the ER-mitochondria encounter structure (ERMES) or MDM complex, composed of mmm1, mdm10, mdm12 and mdm34. A mmm1 homodimer associates with one molecule of mdm12 on each side in a pairwise head-to-tail manner, and the SMP-LTD domains of mmm1 and mdm12 generate a continuous hydrophobic tunnel for phospholipid trafficking.

It localises to the endoplasmic reticulum membrane. In terms of biological role, component of the ERMES/MDM complex, which serves as a molecular tether to connect the endoplasmic reticulum (ER) and mitochondria. Components of this complex are involved in the control of mitochondrial shape and protein biogenesis, and function in nonvesicular lipid trafficking between the ER and mitochondria. The mdm12-mmm1 subcomplex functions in the major beta-barrel assembly pathway that is responsible for biogenesis of all outer membrane beta-barrel proteins, and acts in a late step after the SAM complex. The mdm10-mdm12-mmm1 subcomplex further acts in the TOM40-specific pathway after the action of the mdm12-mmm1 complex. Essential for establishing and maintaining the structure of mitochondria and maintenance of mtDNA nucleoids. The protein is Maintenance of mitochondrial morphology protein 1 of Aspergillus terreus (strain NIH 2624 / FGSC A1156).